Consider the following 194-residue polypeptide: ATP-dependent Clp protease proteolytic subunit (194 aa).

Residue Ser-98 is the Nucleophile of the active site. Residue His-123 is part of the active site.

Belongs to the peptidase S14 family. Fourteen ClpP subunits assemble into 2 heptameric rings which stack back to back to give a disk-like structure with a central cavity, resembling the structure of eukaryotic proteasomes.

The protein resides in the cytoplasm. The catalysed reaction is Hydrolysis of proteins to small peptides in the presence of ATP and magnesium. alpha-casein is the usual test substrate. In the absence of ATP, only oligopeptides shorter than five residues are hydrolyzed (such as succinyl-Leu-Tyr-|-NHMec, and Leu-Tyr-Leu-|-Tyr-Trp, in which cleavage of the -Tyr-|-Leu- and -Tyr-|-Trp bonds also occurs).. Its function is as follows. Cleaves peptides in various proteins in a process that requires ATP hydrolysis. Has a chymotrypsin-like activity. Plays a major role in the degradation of misfolded proteins. The sequence is that of ATP-dependent Clp protease proteolytic subunit from Syntrophotalea carbinolica (strain DSM 2380 / NBRC 103641 / GraBd1) (Pelobacter carbinolicus).